Reading from the N-terminus, the 121-residue chain is Small ribosomal subunit protein uS13 (121 aa).

Positions 95-121 are disordered; that stretch reads GLPVRGQKTKTNARTRKGKRKTVGAKS.

It belongs to the universal ribosomal protein uS13 family. In terms of assembly, part of the 30S ribosomal subunit. Forms a loose heterodimer with protein S19. Forms two bridges to the 50S subunit in the 70S ribosome.

Located at the top of the head of the 30S subunit, it contacts several helices of the 16S rRNA. In the 70S ribosome it contacts the 23S rRNA (bridge B1a) and protein L5 of the 50S subunit (bridge B1b), connecting the 2 subunits; these bridges are implicated in subunit movement. Contacts the tRNAs in the A and P-sites. In Campylobacter jejuni subsp. jejuni serotype O:23/36 (strain 81-176), this protein is Small ribosomal subunit protein uS13.